The sequence spans 343 residues: 2-deoxy-scyllo-inosamine dehydrogenase (343 aa).

Positions 37, 59, 91, 94, 97, 105, and 146 each coordinate Zn(2+).

It belongs to the zinc-containing alcohol dehydrogenase family. DOIA dehydrogenase subfamily. Requires Zn(2+) as cofactor.

The enzyme catalyses 2-deoxy-scyllo-inosamine + NADP(+) = 3-amino-2,3-dideoxy-scyllo-inosose + NADPH + H(+). It catalyses the reaction 2-deoxy-scyllo-inosamine + NAD(+) = 3-amino-2,3-dideoxy-scyllo-inosose + NADH + H(+). Its pathway is metabolic intermediate biosynthesis; 2-deoxystreptamine biosynthesis; 2-deoxystreptamine from D-glucose 6-phosphate: step 3/4. The protein operates within antibiotic biosynthesis; kanamycin biosynthesis. Its function is as follows. Catalyzes the oxidation of 2-deoxy-scyllo-inosamine (DOIA) with NAD(+) or NADP(+), forming 3-amino-2,3-dideoxy-scyllo-inosose (amino-DOI). This Streptomyces kanamyceticus protein is 2-deoxy-scyllo-inosamine dehydrogenase (kanE).